A 79-amino-acid chain; its full sequence is UPF0180 protein Bcer98_1118 (79 aa).

Belongs to the UPF0180 family.

This chain is UPF0180 protein Bcer98_1118, found in Bacillus cytotoxicus (strain DSM 22905 / CIP 110041 / 391-98 / NVH 391-98).